A 183-amino-acid chain; its full sequence is ARS-binding factor 2, mitochondrial (183 aa).

A mitochondrion-targeting transit peptide spans 1 to 26 (MNSYSLLTRSFHESSKPLFNLASTLL). DNA-binding regions (HMG box) lie at residues 43-111 (PKRP…KEFD) and 116-183 (PKKP…YPLN).

It localises to the mitochondrion. The protein localises to the nucleus. In terms of biological role, specific binding to the autonomously replicating sequence 1 (ARS1). Interaction with regulatory regions: probably involved in compacting the mitochondrial genome. It might play a positive role in gene expression and replication. This is ARS-binding factor 2, mitochondrial (ABF2) from Saccharomyces cerevisiae (strain ATCC 204508 / S288c) (Baker's yeast).